The sequence spans 499 residues: Tyrosine-protein kinase Blk (499 aa).

The segment at 1–34 (MGLLSSKRQVSEKGKGWSPVKIRTQDKAPPPLPP) is disordered. Glycine 2 is lipidated: N-myristoyl glycine. The SH3 domain maps to 52–112 (EEERFVVALF…PSNFVAPVET (61 aa)). The region spanning 118-214 (WFFRTISRKD…GLCQKLTLPC (97 aa)) is the SH2 domain. The Protein kinase domain occupies 235–488 (LKLVRKLGSG…FLQSVLEDFY (254 aa)). ATP contacts are provided by residues 241–249 (LGSGQFGEV) and lysine 263. Aspartate 354 acts as the Proton acceptor in catalysis. Tyrosine 383 carries the post-translational modification Phosphotyrosine; by autocatalysis.

The protein belongs to the protein kinase superfamily. Tyr protein kinase family. SRC subfamily. As to quaternary structure, interacts with CBL (via SH2 domain). Interacts with CD79A and CD79B (via SH2 domain). In terms of processing, phosphorylated on tyrosine residues after antibody-mediated surface engagement of the B-cell antigen receptor (BCR). Ubiquitination of activated BLK by the UBE3A ubiquitin protein ligase leads to its degradation by the ubiquitin-proteasome pathway. Expressed in immature Vgamma2 gamma-delta T-cells (at protein level). Expressed in the B-cell lineage.

It localises to the cell membrane. It carries out the reaction L-tyrosyl-[protein] + ATP = O-phospho-L-tyrosyl-[protein] + ADP + H(+). Its activity is regulated as follows. Antibody-mediated surface engagement of the B-cell antigen receptor (BCR) which results in the phosphorylation of BLK on tyrosine residues, stimulates the enzymatic activity. Its function is as follows. Non-receptor tyrosine kinase involved in B-lymphocyte development, differentiation and signaling. B-cell receptor (BCR) signaling requires a tight regulation of several protein tyrosine kinases and phosphatases, and associated coreceptors. Binding of antigen to the B-cell antigen receptor (BCR) triggers signaling that ultimately leads to B-cell activation. Signaling through BLK plays an important role in transmitting signals through surface immunoglobulins and supports the pro-B to pre-B transition, as well as the signaling for growth arrest and apoptosis downstream of B-cell receptor. Specifically binds and phosphorylates CD79A at 'Tyr-188'and 'Tyr-199', as well as CD79B at 'Tyr-196' and 'Tyr-207'. Also phosphorylates the immunoglobulin G receptor FCGR2. With FYN and LYN, plays an essential role in pre-B-cell receptor (pre-BCR)-mediated NF-kappa-B activation. Also contributes to BTK activation by indirectly stimulating BTK intramolecular autophosphorylation. In pancreatic islets, acts as a modulator of beta-cells function through the up-regulation of PDX1 and NKX6-1 and consequent stimulation of insulin secretion in response to glucose. Phosphorylates CGAS, promoting retention of CGAS in the cytosol. The sequence is that of Tyrosine-protein kinase Blk (Blk) from Mus musculus (Mouse).